A 213-amino-acid polypeptide reads, in one-letter code: Urease accessory protein UreE (213 aa).

Positions 170-213 (EHHGHSHSHSHSHSHDHDHDHDHDHDHDHQHGPSCSHGHHHGHR) are disordered. The span at 182-200 (HSHDHDHDHDHDHDHDHQH) shows a compositional bias: basic and acidic residues.

The protein belongs to the UreE family.

Its subcellular location is the cytoplasm. Functionally, involved in urease metallocenter assembly. Binds nickel. Probably functions as a nickel donor during metallocenter assembly. This chain is Urease accessory protein UreE, found in Burkholderia mallei (strain NCTC 10229).